The chain runs to 292 residues: Ribosomal RNA small subunit methyltransferase A (292 aa).

Residues N28, L30, G55, E76, D101, and N126 each contribute to the S-adenosyl-L-methionine site.

The protein belongs to the class I-like SAM-binding methyltransferase superfamily. rRNA adenine N(6)-methyltransferase family. RsmA subfamily.

Its subcellular location is the cytoplasm. It catalyses the reaction adenosine(1518)/adenosine(1519) in 16S rRNA + 4 S-adenosyl-L-methionine = N(6)-dimethyladenosine(1518)/N(6)-dimethyladenosine(1519) in 16S rRNA + 4 S-adenosyl-L-homocysteine + 4 H(+). Functionally, specifically dimethylates two adjacent adenosines (A1518 and A1519) in the loop of a conserved hairpin near the 3'-end of 16S rRNA in the 30S particle. May play a critical role in biogenesis of 30S subunits. The polypeptide is Ribosomal RNA small subunit methyltransferase A (Bacillus cytotoxicus (strain DSM 22905 / CIP 110041 / 391-98 / NVH 391-98)).